A 970-amino-acid polypeptide reads, in one-letter code: Protein CLASP-3 (970 aa).

Disordered regions lie at residues 314–377 (SRLA…QKAR) and 651–675 (NGISSGSGGSGNNHPKATPLRETPH). The span at 344–355 (GSRTRTSSITSN) shows a compositional bias: polar residues. The HEAT repeat unit spans residues 905 to 943 (ITPCVIKAYQSTSSSVRKTVVYCLVAMVNRVGEQRMAPH).

The protein belongs to the CLASP family.

The protein localises to the cytoplasm. It localises to the cytoskeleton. Microtubule plus-end tracking protein that promotes the stabilization of dynamic microtubules. The polypeptide is Protein CLASP-3 (cls-3) (Caenorhabditis briggsae).